We begin with the raw amino-acid sequence, 344 residues long: Holliday junction branch migration complex subunit RuvB (344 aa).

A compositionally biased stretch (low complexity) spans 1–10 (MAIQSSSSGS). The interval 1–37 (MAIQSSSSGSKPPAPKRLVAPEATAAEGDGGRDEGLR) is disordered. Residues 13–197 (PAPKRLVAPE…FGLIQRLEFY (185 aa)) are large ATPase domain (RuvB-L). Residues Leu36, Arg37, Gly78, Lys81, Thr82, Thr83, 144-146 (EDF), Arg187, Tyr197, and Arg234 contribute to the ATP site. Thr82 is a binding site for Mg(2+). Residues 198 to 268 (SCSDLEAIVS…VVVEALAMHR (71 aa)) form a small ATPAse domain (RuvB-S) region. Positions 271-344 (GRGLDPSDRR…DAGRAHLEAA (74 aa)) are head domain (RuvB-H). The DNA site is built by Arg326 and Arg331.

Belongs to the RuvB family. In terms of assembly, homohexamer. Forms an RuvA(8)-RuvB(12)-Holliday junction (HJ) complex. HJ DNA is sandwiched between 2 RuvA tetramers; dsDNA enters through RuvA and exits via RuvB. An RuvB hexamer assembles on each DNA strand where it exits the tetramer. Each RuvB hexamer is contacted by two RuvA subunits (via domain III) on 2 adjacent RuvB subunits; this complex drives branch migration. In the full resolvosome a probable DNA-RuvA(4)-RuvB(12)-RuvC(2) complex forms which resolves the HJ.

Its subcellular location is the cytoplasm. It carries out the reaction ATP + H2O = ADP + phosphate + H(+). Functionally, the RuvA-RuvB-RuvC complex processes Holliday junction (HJ) DNA during genetic recombination and DNA repair, while the RuvA-RuvB complex plays an important role in the rescue of blocked DNA replication forks via replication fork reversal (RFR). RuvA specifically binds to HJ cruciform DNA, conferring on it an open structure. The RuvB hexamer acts as an ATP-dependent pump, pulling dsDNA into and through the RuvAB complex. RuvB forms 2 homohexamers on either side of HJ DNA bound by 1 or 2 RuvA tetramers; 4 subunits per hexamer contact DNA at a time. Coordinated motions by a converter formed by DNA-disengaged RuvB subunits stimulates ATP hydrolysis and nucleotide exchange. Immobilization of the converter enables RuvB to convert the ATP-contained energy into a lever motion, pulling 2 nucleotides of DNA out of the RuvA tetramer per ATP hydrolyzed, thus driving DNA branch migration. The RuvB motors rotate together with the DNA substrate, which together with the progressing nucleotide cycle form the mechanistic basis for DNA recombination by continuous HJ branch migration. Branch migration allows RuvC to scan DNA until it finds its consensus sequence, where it cleaves and resolves cruciform DNA. The protein is Holliday junction branch migration complex subunit RuvB of Synechococcus sp. (strain RCC307).